A 488-amino-acid chain; its full sequence is Leucine-rich repeat-containing protein 74A (488 aa).

LRR repeat units lie at residues 134–155 (AVTKLELEDNCIMEEGVLSLVE), 162–182 (YLQEMNISNNHLGLEGARIIS), 191–212 (SIWSLELSGNDFKEDSAALLCQ), 219–239 (QIKKLDLSHNQFSDVGGEHLG), 247–268 (GLTSLDLSWNNFHTRGAVALCN), 275–296 (TLTKLDLSMNGFGNEVALALGE), 303–324 (CLVYLDIGGNDIGNEGASKISK), and 331–351 (SLRVLKLFLNPINMDGAILLI).

The chain is Leucine-rich repeat-containing protein 74A from Homo sapiens (Human).